The chain runs to 273 residues: Large ribosomal subunit protein uL2 (273 aa).

Residues 221-262 (RGTAMNPVDHPHGGGEGRNFGKHPVTPWGVQTKGKKTRHNKR) form a disordered region. The span at 253–262 (KGKKTRHNKR) shows a compositional bias: basic residues.

Belongs to the universal ribosomal protein uL2 family. In terms of assembly, part of the 50S ribosomal subunit. Forms a bridge to the 30S subunit in the 70S ribosome.

Its function is as follows. One of the primary rRNA binding proteins. Required for association of the 30S and 50S subunits to form the 70S ribosome, for tRNA binding and peptide bond formation. It has been suggested to have peptidyltransferase activity; this is somewhat controversial. Makes several contacts with the 16S rRNA in the 70S ribosome. In Haemophilus influenzae (strain ATCC 51907 / DSM 11121 / KW20 / Rd), this protein is Large ribosomal subunit protein uL2.